We begin with the raw amino-acid sequence, 60 residues long: MPGEELVRRFLERRVLTEKNIERFVKYYWLVSTARMVLGVTILILILIGGLKFSQLIPWR.

The helical transmembrane segment at 27–49 (YYWLVSTARMVLGVTILILILIG) threads the bilayer.

It is found in the membrane. This is an uncharacterized protein from Archaeoglobus fulgidus (strain ATCC 49558 / DSM 4304 / JCM 9628 / NBRC 100126 / VC-16).